Consider the following 922-residue polypeptide: Ubiquitin carboxyl-terminal hydrolase 29 (922 aa).

A disordered region spans residues 160-196; sequence GILENQGGKGQNTLSSDVQTNEDILKEDNPVPNKKYK. Positions 170–181 are enriched in polar residues; sequence QNTLSSDVQTNE. The USP domain occupies 285 to 885; that stretch reads QGFPNLGNTC…SGYIFFYMHN (601 aa). Cys-294 functions as the Nucleophile in the catalytic mechanism. Catalysis depends on His-840, which acts as the Proton acceptor.

Belongs to the peptidase C19 family.

The protein localises to the cytoplasm. Its subcellular location is the perinuclear region. The enzyme catalyses Thiol-dependent hydrolysis of ester, thioester, amide, peptide and isopeptide bonds formed by the C-terminal Gly of ubiquitin (a 76-residue protein attached to proteins as an intracellular targeting signal).. In terms of biological role, deubiquitinase involved in innate antiviral immunity by mediating 'Lys-48'-linked deubiquitination of CGAS, thereby promoting its stabilization. The protein is Ubiquitin carboxyl-terminal hydrolase 29 of Homo sapiens (Human).